Here is a 235-residue protein sequence, read N- to C-terminus: Purine nucleoside phosphorylase DeoD-type (235 aa).

A purine D-ribonucleoside is bound at residue histidine 4. Phosphate-binding positions include glycine 20, arginine 24, arginine 43, and 87–90 (RVGT). Residues 180-182 (EME) and 204-205 (SD) each bind a purine D-ribonucleoside. Aspartate 205 serves as the catalytic Proton donor.

This sequence belongs to the PNP/UDP phosphorylase family. In terms of assembly, homohexamer; trimer of homodimers.

It carries out the reaction a purine D-ribonucleoside + phosphate = a purine nucleobase + alpha-D-ribose 1-phosphate. The enzyme catalyses a purine 2'-deoxy-D-ribonucleoside + phosphate = a purine nucleobase + 2-deoxy-alpha-D-ribose 1-phosphate. In terms of biological role, catalyzes the reversible phosphorolytic breakdown of the N-glycosidic bond in the beta-(deoxy)ribonucleoside molecules, with the formation of the corresponding free purine bases and pentose-1-phosphate. This chain is Purine nucleoside phosphorylase DeoD-type, found in Oceanobacillus iheyensis (strain DSM 14371 / CIP 107618 / JCM 11309 / KCTC 3954 / HTE831).